Reading from the N-terminus, the 351-residue chain is UDP-3-O-acylglucosamine N-acyltransferase (351 aa).

The active-site Proton acceptor is the His-240.

The protein belongs to the transferase hexapeptide repeat family. LpxD subfamily. In terms of assembly, homotrimer.

The catalysed reaction is a UDP-3-O-[(3R)-3-hydroxyacyl]-alpha-D-glucosamine + a (3R)-hydroxyacyl-[ACP] = a UDP-2-N,3-O-bis[(3R)-3-hydroxyacyl]-alpha-D-glucosamine + holo-[ACP] + H(+). Its pathway is bacterial outer membrane biogenesis; LPS lipid A biosynthesis. In terms of biological role, catalyzes the N-acylation of UDP-3-O-acylglucosamine using 3-hydroxyacyl-ACP as the acyl donor. Is involved in the biosynthesis of lipid A, a phosphorylated glycolipid that anchors the lipopolysaccharide to the outer membrane of the cell. The polypeptide is UDP-3-O-acylglucosamine N-acyltransferase (Pseudomonas fluorescens (strain ATCC BAA-477 / NRRL B-23932 / Pf-5)).